A 474-amino-acid chain; its full sequence is Synaptotagmin-17 (474 aa).

Residues 60–117 (WLMASRSNDKDGDSVHTASDVPLTPRTNSPDGRRSSSDTSKSTYSLTRRISSLDSRRP) are disordered. Low complexity predominate over residues 96 to 117 (SDTSKSTYSLTRRISSLDSRRP). 2 positions are modified to phosphoserine: S118 and S119. C2 domains follow at residues 184–310 (QLGM…HWWK) and 321–455 (ELGE…EQWH).

The protein belongs to the synaptotagmin family. As to expression, expressed in brain and kidney.

It localises to the membrane. In terms of biological role, plays a role in dendrite formation by melanocytes. The polypeptide is Synaptotagmin-17 (Syt17) (Rattus norvegicus (Rat)).